Consider the following 621-residue polypeptide: C4-dicarboxylate transport sensor protein DctB (621 aa).

Residues 1-26 are Cytoplasmic-facing; the sequence is MHHVRMVKLPAEASDPHALRSRARRS. The chain crosses the membrane as a helical span at residues 27 to 45; the sequence is WLVFAAVALVLLAAGLLLA. The Periplasmic portion of the chain corresponds to 46–320; it reads RDYGRSQALA…PLAAGAREAQ (275 aa). Residues 321-338 form a helical membrane-spanning segment; that stretch reads LLTLAALVPLLALAALLL. At 339–621 the chain is on the cytoplasmic side; the sequence is RRRQVVAMRS…TTFAVNLKKA (283 aa). Residues 412 to 621 form the Histidine kinase domain; it reads GVAHEINQPV…TTFAVNLKKA (210 aa). His415 is subject to Phosphohistidine; by autocatalysis.

In terms of processing, autophosphorylated.

The protein localises to the cell inner membrane. It carries out the reaction ATP + protein L-histidine = ADP + protein N-phospho-L-histidine.. Functionally, member of the two-component regulatory system DctB/DctD involved in the transport of C4-dicarboxylates. DctB functions as a membrane-associated protein kinase that phosphorylates DctD in response to environmental signals. This is C4-dicarboxylate transport sensor protein DctB (dctB) from Rhizobium meliloti (strain 1021) (Ensifer meliloti).